The chain runs to 376 residues: MAINVNTNVSAMTAQRYLNGAADGMQKSMERLSSGYKINSARDDAAGLQISNRLTSQSRGLDMAVKNANDGISIAQTAEGAMNETTNILQRMRDLALQSSNGSNSSSERRAIQEEVSALNDELNRIAETTSFGGNKLLNGSFGSKSFQIGADSGEAVMLSMGSMRSDTQAMGGKSYRAQEGKAADWRVGAATDLTLSYTNKQGEAREVTINAKQGDDLEELATYINGQTEDVKASVGEDGKLQLFASSQKVNGDVTIGGGLGGEIGFDAGRNVTVADVNVSTVAGSQEAVSILDGALKAVDSQRASLGAFQNRFGHAISNLDNVNENVNASRSRIRDTDYARETTAMTKAQILQQASTSVLAQAKQSPSAALSLLG.

The stretch at 103 to 129 forms a coiled coil; it reads SNSSSERRAIQEEVSALNDELNRIAET.

Belongs to the bacterial flagellin family. In terms of assembly, heteromer of multiple flagellin subunits including FlaA, FlaB, FlaC, FlaD and FlaE.

Its subcellular location is the secreted. The protein localises to the bacterial flagellum. Functionally, flagellin is the subunit protein which polymerizes to form the filaments of bacterial flagella. FlaB is not essential for flagellar synthesis and motility. The sequence is that of Flagellin B (flaB) from Vibrio cholerae serotype O1 (strain ATCC 39541 / Classical Ogawa 395 / O395).